Reading from the N-terminus, the 403-residue chain is Na(+)-translocating NADH-quinone reductase subunit B (403 aa).

9 helical membrane-spanning segments follow: residues 56 to 76, 121 to 141, 163 to 183, 220 to 240, 258 to 278, 287 to 307, 312 to 332, 348 to 368, and 371 to 391; these read MMITVWLCTFPAMFFGMWNTG, AYFLPIYAVTFIVGGFWEVLF, ILPPTIPLWQVALGISFGVVI, WTAVDGYAGATALSLGFAGGI, IHGSIGETSTLAIFIGGAVLI, IVTGVMLGMIALSTLFNLIGS, LFGMPWYWHMVVGGFAFGMIF, WVFGILIGVMVVLIRVVNPAF, and GMMLAILFANLCAPLIDHFVI. T230 carries the post-translational modification FMN phosphoryl threonine.

It belongs to the NqrB/RnfD family. In terms of assembly, composed of six subunits; NqrA, NqrB, NqrC, NqrD, NqrE and NqrF. Requires FMN as cofactor.

The protein resides in the cell inner membrane. The enzyme catalyses a ubiquinone + n Na(+)(in) + NADH + H(+) = a ubiquinol + n Na(+)(out) + NAD(+). In terms of biological role, NQR complex catalyzes the reduction of ubiquinone-1 to ubiquinol by two successive reactions, coupled with the transport of Na(+) ions from the cytoplasm to the periplasm. NqrA to NqrE are probably involved in the second step, the conversion of ubisemiquinone to ubiquinol. The protein is Na(+)-translocating NADH-quinone reductase subunit B of Stutzerimonas stutzeri (strain A1501) (Pseudomonas stutzeri).